Reading from the N-terminus, the 956-residue chain is Replication factor C subunit 1 (956 aa).

2 stretches are compositionally biased toward basic and acidic residues: residues 1–15 (MSDI…HEKG) and 50–74 (TADR…KEVE). Disordered regions lie at residues 1 to 206 (MSDI…TPDC) and 286 to 332 (KKSL…AKGK). The span at 158 to 183 (RGRGGRAAPGASTGGRGRGGGRGGFM) shows a compositional bias: gly residues. Composition is skewed to basic and acidic residues over residues 186-200 (GERK…KEVP) and 288-298 (SLPERSNKGTE). Residues 202–292 (GTPDCLAGLT…KPVKKSLPER (91 aa)) enclose the BRCT domain. 399–406 (SGTPGIGK) contacts ATP. A disordered region spans residues 858 to 956 (LEPTVDSLRD…GRGSGAKRKR (99 aa)). Positions 866–892 (RDEDGEPLADNEEGNGSDAEEDSEEAT) are enriched in acidic residues. Residues 916-925 (KGAGSSGSRK) show a composition bias toward low complexity.

This sequence belongs to the activator 1 large subunit family. In terms of assembly, heterotetramer of subunits RFC2, RFC3, RFC4 and RFC5 that can form a complex with RFC1. Expressed at high levels in flowers and siliques, and at lower levels in roots, stems and leaves.

It is found in the nucleus. Functionally, plays a role as mediator of transcriptional gene silencing (TGS), DNA replication, DNA repair, hypersensitive response (HR) and telomere length regulation. Is required in meiosis for DNA double-strand break (DSB) repair during meiotic homologous recombination. May participate in the RAD51-mediated recombination intermediate repair process. Is important for lagging strand synthesis. Promotes meiotic recombination via a specific pathway for crossovers (COs) that involves the formation of double Holliday Junction (dHJ) intermediates. This is Replication factor C subunit 1 (RFC1) from Arabidopsis thaliana (Mouse-ear cress).